A 421-amino-acid polypeptide reads, in one-letter code: Peroxisomal succinyl-coenzyme A thioesterase (421 aa).

The active-site Charge relay system is Ser232. An N6-succinyllysine modification is found at Lys313. Active-site charge relay system residues include Asp326 and His360. Residues 419–421 carry the Microbody targeting signal motif; that stretch reads CRL.

This sequence belongs to the C/M/P thioester hydrolase family. In terms of tissue distribution, mainly expressed in liver and kidney. Weakly expressed in other tissues including intestine, adrenal gland and adipose tissues.

It is found in the peroxisome. It catalyses the reaction succinyl-CoA + H2O = succinate + CoA + H(+). It carries out the reaction glutaryl-CoA + H2O = glutarate + CoA + H(+). It functions in the pathway lipid metabolism; fatty acid metabolism. Catalyzes the hydrolysis of acyl-CoAs into free fatty acids and coenzyme A (CoASH), regulating their respective intracellular levels. In contrast to its human ortholog, functions essentially as a succinyl-CoA thioesterase with no activity with medium to long chain saturated acyl-CoAs and with a low activity toward glutaryl-CoA. This is Peroxisomal succinyl-coenzyme A thioesterase (Acot4) from Mus musculus (Mouse).